Consider the following 158-residue polypeptide: SsrA-binding protein (158 aa).

It belongs to the SmpB family.

The protein resides in the cytoplasm. Functionally, required for rescue of stalled ribosomes mediated by trans-translation. Binds to transfer-messenger RNA (tmRNA), required for stable association of tmRNA with ribosomes. tmRNA and SmpB together mimic tRNA shape, replacing the anticodon stem-loop with SmpB. tmRNA is encoded by the ssrA gene; the 2 termini fold to resemble tRNA(Ala) and it encodes a 'tag peptide', a short internal open reading frame. During trans-translation Ala-aminoacylated tmRNA acts like a tRNA, entering the A-site of stalled ribosomes, displacing the stalled mRNA. The ribosome then switches to translate the ORF on the tmRNA; the nascent peptide is terminated with the 'tag peptide' encoded by the tmRNA and targeted for degradation. The ribosome is freed to recommence translation, which seems to be the essential function of trans-translation. This chain is SsrA-binding protein, found in Acinetobacter baumannii (strain AB307-0294).